Consider the following 391-residue polypeptide: Adaptive-response sensory kinase SasA (391 aa).

Residues 169 to 391 (MLAHDLRSPL…CFHFTLPVCR (223 aa)) enclose the Histidine kinase domain. Residue histidine 172 is modified to Phosphohistidine; by autocatalysis.

Homooligomerizes. Interacts with KaiC. Participates in the KaiABC clock complex, whose core is composed of a KaiC homohexamer, 6 KaiB and up to 6 KaiA dimers. SasA and KaiB(fs) compete to bind to KaiC.

The catalysed reaction is ATP + protein L-histidine = ADP + protein N-phospho-L-histidine.. In terms of biological role, member of the two-component regulatory system SasA/RpaA involved in genome-wide circadian gene expression. One of several clock output pathways. Participates in the Kai clock protein complex, the main circadian regulator in cyanobacteria, via its interaction with KaiC. KaiC enhances the autophosphorylation activity of SasA, which then transfers its phosphate group to RpaA to activate it. In addition to its output function, recruits fold-shifted KaiB (KaiB(fs)) to KaiC to cooperatively form the KaiB(6):KaiC(6) complex (independent of SasA kinase activity). Required for robustness of the circadian rhythm of gene expression and is involved in clock output, also required for adaptation to light/dark cycles. This Rippkaea orientalis (strain PCC 8801 / RF-1) (Cyanothece sp. (strain PCC 8801)) protein is Adaptive-response sensory kinase SasA.